Reading from the N-terminus, the 126-residue chain is Phosphoribosyl-AMP cyclohydrolase (126 aa).

Aspartate 77 is a binding site for Mg(2+). Cysteine 78 is a binding site for Zn(2+). Residues aspartate 79 and aspartate 81 each coordinate Mg(2+). Positions 95 and 102 each coordinate Zn(2+).

Belongs to the PRA-CH family. Homodimer. The cofactor is Mg(2+). It depends on Zn(2+) as a cofactor.

It localises to the cytoplasm. The catalysed reaction is 1-(5-phospho-beta-D-ribosyl)-5'-AMP + H2O = 1-(5-phospho-beta-D-ribosyl)-5-[(5-phospho-beta-D-ribosylamino)methylideneamino]imidazole-4-carboxamide. Its pathway is amino-acid biosynthesis; L-histidine biosynthesis; L-histidine from 5-phospho-alpha-D-ribose 1-diphosphate: step 3/9. Catalyzes the hydrolysis of the adenine ring of phosphoribosyl-AMP. In Cellvibrio japonicus (strain Ueda107) (Pseudomonas fluorescens subsp. cellulosa), this protein is Phosphoribosyl-AMP cyclohydrolase.